A 79-amino-acid chain; its full sequence is Short neurotoxin 3 (79 aa).

An N-terminal signal peptide occupies residues 1–21 (MKTLLLTLVMVTIMCLDLGYT). Disulfide bonds link cysteine 24–cysteine 41, cysteine 34–cysteine 59, cysteine 63–cysteine 71, and cysteine 72–cysteine 77.

This sequence belongs to the three-finger toxin family. Short-chain subfamily. Type III alpha-neurotoxin sub-subfamily. As to expression, expressed by the venom gland.

The protein resides in the secreted. Binds with high affinity to muscle nicotinic acetylcholine receptor (nAChR) and hinders acetylcholine binding to the receptor, thereby impairing neuromuscular transmission. Competes with the binding of alpha-bungarotoxin on muscle AChR (from Torpedo) with an IC(50) of 0.30 uM. Causes muscle paralysis, spasms and increased respiration. The protein is Short neurotoxin 3 of Pseudonaja textilis (Eastern brown snake).